Here is a 112-residue protein sequence, read N- to C-terminus: Integration host factor subunit alpha (112 aa).

Belongs to the bacterial histone-like protein family. Heterodimer of an alpha and a beta chain.

This protein is one of the two subunits of integration host factor, a specific DNA-binding protein that functions in genetic recombination as well as in transcriptional and translational control. The chain is Integration host factor subunit alpha from Rhizobium johnstonii (strain DSM 114642 / LMG 32736 / 3841) (Rhizobium leguminosarum bv. viciae).